The following is a 205-amino-acid chain: Dephospho-CoA kinase (205 aa).

Positions 4 to 203 constitute a DPCK domain; sequence KIGITGGIGS…QKIHYLCSAK (200 aa). 12–17 provides a ligand contact to ATP; the sequence is GSGKSV.

It belongs to the CoaE family.

The protein resides in the cytoplasm. It catalyses the reaction 3'-dephospho-CoA + ATP = ADP + CoA + H(+). It functions in the pathway cofactor biosynthesis; coenzyme A biosynthesis; CoA from (R)-pantothenate: step 5/5. In terms of biological role, catalyzes the phosphorylation of the 3'-hydroxyl group of dephosphocoenzyme A to form coenzyme A. In Bacteroides fragilis (strain YCH46), this protein is Dephospho-CoA kinase.